Reading from the N-terminus, the 364-residue chain is Mannose-1-phosphate guanyltransferase (364 aa).

Belongs to the transferase hexapeptide repeat family.

The protein resides in the cytoplasm. The catalysed reaction is alpha-D-mannose 1-phosphate + GTP + H(+) = GDP-alpha-D-mannose + diphosphate. Its pathway is nucleotide-sugar biosynthesis; GDP-alpha-D-mannose biosynthesis; GDP-alpha-D-mannose from alpha-D-mannose 1-phosphate (GTP route): step 1/1. Its function is as follows. Involved in cell wall synthesis where it is required for glycosylation. Involved in cell cycle progression through cell-size checkpoint. The chain is Mannose-1-phosphate guanyltransferase (mpg1) from Hypocrea jecorina (Trichoderma reesei).